A 360-amino-acid polypeptide reads, in one-letter code: D-alanine--D-alanine ligase (360 aa).

The 207-residue stretch at 146–352 (KLCVADAGIA…FPELAERLLQ (207 aa)) folds into the ATP-grasp domain. An ATP-binding site is contributed by 179-234 (EEKFIYPFFVKPANLGSSIGISKVHHREQLPAALKSACSLDSKIVVEKAITGREIE). Mg(2+) contacts are provided by Asp-305, Glu-319, and Asn-321.

Belongs to the D-alanine--D-alanine ligase family. Mg(2+) serves as cofactor. The cofactor is Mn(2+).

The protein resides in the cytoplasm. It carries out the reaction 2 D-alanine + ATP = D-alanyl-D-alanine + ADP + phosphate + H(+). Its pathway is cell wall biogenesis; peptidoglycan biosynthesis. Its function is as follows. Cell wall formation. The polypeptide is D-alanine--D-alanine ligase (Pelodictyon phaeoclathratiforme (strain DSM 5477 / BU-1)).